The primary structure comprises 205 residues: uncharacterized protein (205 aa).

The next 5 helical transmembrane spans lie at 5–25 (VWLA…SGTV), 41–61 (GAII…GIGI), 68–88 (SALA…WLGI), 117–137 (LINL…PQFI), and 147–167 (FLVL…GYTA).

It belongs to the Rht family.

It localises to the cell inner membrane. In terms of biological role, involved in positive regulation of motility and negative regulation of biofilm formation. This is an uncharacterized protein from Vibrio cholerae serotype O1 (strain ATCC 39315 / El Tor Inaba N16961).